Here is a 510-residue protein sequence, read N- to C-terminus: Histidine ammonia-lyase (510 aa).

The 5-imidazolinone (Ala-Gly) cross-link spans 145 to 147 (ASG). Serine 146 bears the 2,3-didehydroalanine (Ser) mark.

This sequence belongs to the PAL/histidase family. In terms of processing, contains an active site 4-methylidene-imidazol-5-one (MIO), which is formed autocatalytically by cyclization and dehydration of residues Ala-Ser-Gly.

Its subcellular location is the cytoplasm. It catalyses the reaction L-histidine = trans-urocanate + NH4(+). It functions in the pathway amino-acid degradation; L-histidine degradation into L-glutamate; N-formimidoyl-L-glutamate from L-histidine: step 1/3. The sequence is that of Histidine ammonia-lyase from Stigmatella aurantiaca.